Consider the following 315-residue polypeptide: ATP synthase gamma chain (315 aa).

The protein belongs to the ATPase gamma chain family. F-type ATPases have 2 components, CF(1) - the catalytic core - and CF(0) - the membrane proton channel. CF(1) has five subunits: alpha(3), beta(3), gamma(1), delta(1), epsilon(1). CF(0) has three main subunits: a, b and c.

The protein localises to the cellular thylakoid membrane. In terms of biological role, produces ATP from ADP in the presence of a proton gradient across the membrane. The gamma chain is believed to be important in regulating ATPase activity and the flow of protons through the CF(0) complex. In Cyanothece sp. (strain PCC 7425 / ATCC 29141), this protein is ATP synthase gamma chain.